Consider the following 208-residue polypeptide: Uracil phosphoribosyltransferase (208 aa).

5-phospho-alpha-D-ribose 1-diphosphate is bound by residues arginine 78, arginine 103, and 130–138 (DPMLATGGS). Residues isoleucine 193 and 198-200 (GDA) each bind uracil. Aspartate 199 contributes to the 5-phospho-alpha-D-ribose 1-diphosphate binding site.

The protein belongs to the UPRTase family. The cofactor is Mg(2+).

The enzyme catalyses UMP + diphosphate = 5-phospho-alpha-D-ribose 1-diphosphate + uracil. It functions in the pathway pyrimidine metabolism; UMP biosynthesis via salvage pathway; UMP from uracil: step 1/1. Its activity is regulated as follows. Allosterically activated by GTP. Catalyzes the conversion of uracil and 5-phospho-alpha-D-ribose 1-diphosphate (PRPP) to UMP and diphosphate. In Trichlorobacter lovleyi (strain ATCC BAA-1151 / DSM 17278 / SZ) (Geobacter lovleyi), this protein is Uracil phosphoribosyltransferase.